Here is a 650-residue protein sequence, read N- to C-terminus: Chaperone protein HtpG (650 aa).

The interval 1 to 344 (MSKHTHSFQA…SADLPLNVSR (344 aa)) is a; substrate-binding. A b region spans residues 345 to 582 (ELLQESRDVR…DGGMSTQLAR (238 aa)). The segment at 583–650 (LLKQAGQSAP…YVKRVNALLA (68 aa)) is c.

This sequence belongs to the heat shock protein 90 family. Homodimer.

The protein resides in the cytoplasm. In terms of biological role, molecular chaperone. Has ATPase activity. The polypeptide is Chaperone protein HtpG (Acidovorax sp. (strain JS42)).